The chain runs to 230 residues: Thymidylate kinase (230 aa).

Residue 20 to 27 (GGEGSGKS) participates in ATP binding.

The protein belongs to the thymidylate kinase family.

The catalysed reaction is dTMP + ATP = dTDP + ADP. Phosphorylation of dTMP to form dTDP in both de novo and salvage pathways of dTTP synthesis. The protein is Thymidylate kinase of Nitrobacter hamburgensis (strain DSM 10229 / NCIMB 13809 / X14).